Here is a 456-residue protein sequence, read N- to C-terminus: Neurexin-3-beta (456 aa).

Positions 1-35 are cleaved as a signal peptide; that stretch reads MHLRIHARRNPPRRPAWTLGIWSLFWGCIVSSVWS. Residues 36–381 lie on the Extracellular side of the membrane; that stretch reads SSNVASSSSS…EVIRESSSTT (346 aa). Positions 41-63 are disordered; sequence SSSSSPGSHSQHEHHFHGSKHHS. Residues 52–63 show a composition bias toward basic residues; sequence HEHHFHGSKHHS. The Laminin G-like domain occupies 82-282; the sequence is ATYIFGKSGG…NPNIKINGSV (201 aa). Positions 134 and 151 each coordinate Ca(2+). Residue asparagine 181 is glycosylated (N-linked (GlcNAc...) asparagine). Positions 233 and 235 each coordinate Ca(2+). N-linked (GlcNAc...) asparagine glycosylation is found at asparagine 279 and asparagine 323. A disordered region spans residues 316-340; sequence ATTTTRKNRSTASIQPTSDDLVSSA. The span at 325-340 shows a compositional bias: polar residues; the sequence is STASIQPTSDDLVSSA. The O-linked (Xyl...) (heparan sulfate) serine glycan is linked to serine 339. A helical transmembrane segment spans residues 382 to 402; the sequence is GMVVGIVAAAALCILILLYAM. The Cytoplasmic portion of the chain corresponds to 403–456; sequence YKYRNRDEGSYQVDETRNYISNSAQSNGTLLKEKPPSSKGGHKKQKNKDKEYYV. Residues 424 to 456 form a disordered region; sequence NSAQSNGTLLKEKPPSSKGGHKKQKNKDKEYYV.

It belongs to the neurexin family. In terms of assembly, weakly interacts with CBLN1 and CBLN2. Very weak binding, if any, to CBLN4. Specific isoforms bind neuroligins NLGN1, NLGN2 and NLGN3. Interacts with CLSTN3. In terms of processing, processed by alpha-secretase leading to the formation of an extracellular soluble protein as well as a C-terminal membrane-embedded fragment (CTF). Proteolysis of these CTFs by gamma-secretase releases intracellular domains (ICDs) and extracellular peptides. Post-translationally, O-glycosylated; contains heparan sulfate. Heparan sulfate attachment is required for synapse development by mediating interactions with neuroligins.

The protein localises to the presynaptic cell membrane. It localises to the secreted. Neuronal cell surface protein that may be involved in cell recognition and cell adhesion. May mediate intracellular signaling. Functions as part of a trans-synaptic complex by binding to cerebellins and postsynaptic GRID1. This interaction helps regulate the activity of NMDA and AMPA receptors at hippocampal synapses without affecting synapse formation. NRXN3B-CBLN2-GRID1 complex transduce presynaptic signals into postsynaptic AMPAR response. This is Neurexin-3-beta (NRXN3) from Bos taurus (Bovine).